A 975-amino-acid polypeptide reads, in one-letter code: E3 ubiquitin-protein ligase NEDD4-like (975 aa).

Ala-2 is subject to N-acetylalanine. One can recognise a C2 domain in the interval 4–126 (GLGEPVYGLS…TEDPTMERPY (123 aa)). Disordered regions lie at residues 178 to 202 (DSND…WEEK), 244 to 272 (AAHR…VPEP), and 285 to 312 (DSLG…EELS). One can recognise a WW 1 domain in the interval 193 to 226 (PPLPPGWEEKVDNLGRTYYVNHNNRTTQWHRPSL). Position 312 is a phosphoserine (Ser-312). Thr-318 is subject to Phosphothreonine. The residue at position 342 (Ser-342) is a Phosphoserine; by WNK1 and WNK4. Disordered regions lie at residues 349–393 (EQGH…GWEE) and 424–496 (GASG…KVTQ). Thr-367 carries the post-translational modification Phosphothreonine; by SGK1. The WW 2 domain occupies 385-418 (PGLPSGWEERKDAKGRTYYVNHNNRTTTWTRPIM). At Ser-446 the chain carries Phosphoserine. Ser-448 carries the post-translational modification Phosphoserine; by PKA and SGK1. Phosphoserine; by WNK1 and WNK4 is present on Ser-449. A compositionally biased stretch (basic and acidic residues) spans 460–471 (GAKDSPVRRAVK). Phosphoserine is present on residues Ser-464, Ser-475, Ser-479, Ser-483, and Ser-487. WW domains are found at residues 497–530 (SFLP…DPRL) and 548–581 (GPLP…DPRL). Residues 640 to 974 (RPDVLKARLW…VENAQGFEGV (335 aa)) enclose the HECT domain. Cys-942 (glycyl thioester intermediate) is an active-site residue.

Interacts with UBE2E3. Interacts with NDFIP1; this interaction activates the E3 ubiquitin-protein ligase. Interacts with NDFIP2; this interaction activates the E3 ubiquitin-protein ligase. Interacts (via WW domains) with SCN1A. Interacts (via WW domains) with SCN2A. Interacts (via WW domains) with SCN3A. Interacts (via WW domains) with SCN5A. Interacts (via WW domains) with SCN8A. Interacts (via WW domains) with SCN9A. Interacts (via WW domains) with SCN10A. Interacts (via WW domains) with CLCN5. Interacts with SMAD2. Interacts with SMAD3. Interacts with SMAD6. Interacts with SMAD7. The phosphorylated form interacts with 14-3-3 proteins. Interacts with TNK2. Interacts with WNK1. Interacts with SGK1. Interacts (via C2 domain) with NPC2. Interacts with ARRDC4. Interacts with KCNQ1; promotes internalization of KCNQ1. Interacts (via domains WW1, 3 and 4) with USP36; the interaction inhibits ubiquitination of, at least, NTRK1, KCNQ2 and KCNQ3 by NEDD4L. Interacts with PRRG4 (via cytoplasmic domain). Interacts with LDLRAD3; the interaction is direct. Interacts with UBE2D2. Interacts with TTYH2 and TTYH3. As to quaternary structure, (Microbial infection) Interacts with Epstein-Barr virus LMP2A. Post-translationally, phosphorylated by SGK1 or PKA; which impairs interaction with SCNN. Interaction with YWHAH inhibits dephosphorylation. Auto-ubiquitinated. Deubiquitinated by USP36, no effect on NEDD4L protein levels. Both proteins interact and regulate each other's ubiquitination levels. Ubiquitously expressed, with highest levels in prostate, pancreas, and kidney. Expressed in melanocytes.

The protein localises to the cytoplasm. The protein resides in the golgi apparatus. Its subcellular location is the endosome. It localises to the multivesicular body. It carries out the reaction S-ubiquitinyl-[E2 ubiquitin-conjugating enzyme]-L-cysteine + [acceptor protein]-L-lysine = [E2 ubiquitin-conjugating enzyme]-L-cysteine + N(6)-ubiquitinyl-[acceptor protein]-L-lysine.. The catalysed reaction is [E2 ubiquitin-conjugating enzyme]-S-ubiquitinyl-L-cysteine + [acceptor protein]-L-cysteine = [E2 ubiquitin-conjugating enzyme]-L-cysteine + [acceptor protein]-S-ubiquitinyl-L-cysteine.. The protein operates within protein modification; protein ubiquitination. Activated by NDFIP1- and NDFIP2-binding. In terms of biological role, E3 ubiquitin-protein ligase that mediates the polyubiquitination of lysine and cysteine residues on target proteins and is thereby implicated in the regulation of various signaling pathways including autophagy, innate immunity or DNA repair. Inhibits TGF-beta signaling by triggering SMAD2 and TGFBR1 ubiquitination and proteasome-dependent degradation. Downregulates autophagy and cell growth by ubiquitinating and reducing cellular ULK1 or ASCT2 levels. Promotes ubiquitination and internalization of various plasma membrane channels such as ENaC, SCN2A/Nav1.2, SCN3A/Nav1.3, SCN5A/Nav1.5, SCN9A/Nav1.7, SCN10A/Nav1.8, KCNA3/Kv1.3, KCNH2, EAAT1, KCNQ2/Kv7.2, KCNQ3/Kv7.3 or CLC5. Promotes ubiquitination and degradation of SGK1 and TNK2. Ubiquitinates BRAT1 and this ubiquitination is enhanced in the presence of NDFIP1. Plays a role in dendrite formation by melanocytes. Involved in the regulation of TOR signaling. Ubiquitinates and regulates protein levels of NTRK1 once this one is activated by NGF. Plays a role in antiviral innate immunity by catalyzing 'Lys-29'-linked cysteine ubiquitination of TRAF3, resulting in enhanced 'Lys-48' and 'Lys-63'-linked ubiquitination of TRAF3. Ubiquitinates TTYH2 and TTYH3 and regulates protein levels of TTYH2. The chain is E3 ubiquitin-protein ligase NEDD4-like from Homo sapiens (Human).